A 190-amino-acid chain; its full sequence is Guanylate kinase (190 aa).

The Guanylate kinase-like domain maps to 8-186 (ARPTVLTGPS…ALAELEKQMN (179 aa)). Position 15-22 (15-22 (GPSGVGKG)) interacts with ATP.

It belongs to the guanylate kinase family.

The protein localises to the cytoplasm. It carries out the reaction GMP + ATP = GDP + ADP. The enzyme catalyses dZMP + ATP = dZDP + ADP. Its pathway is purine metabolism. Functionally, essential for recycling GMP and indirectly, cGMP. (Microbial infection) Catalyzes the phosphorylation of dZMP to dZDP, when the bacterium is infected by a phage that produces the substrate for the synthesis of dZTP (2- amino-2'-deoxyadenosine 5'-triphosphate), which is then used by the phage as a DNA polymerase substrate. The protein is Guanylate kinase of Synechococcus sp. (strain CC9311).